Reading from the N-terminus, the 203-residue chain is Small ribosomal subunit protein uS4 (203 aa).

The region spanning 93–153 (QRLDSVVYRL…EKSKNILPIQ (61 aa)) is the S4 RNA-binding domain.

The protein belongs to the universal ribosomal protein uS4 family. As to quaternary structure, part of the 30S ribosomal subunit. Contacts protein S5. The interaction surface between S4 and S5 is involved in control of translational fidelity.

Its function is as follows. One of the primary rRNA binding proteins, it binds directly to 16S rRNA where it nucleates assembly of the body of the 30S subunit. Functionally, with S5 and S12 plays an important role in translational accuracy. This is Small ribosomal subunit protein uS4 from Leuconostoc mesenteroides subsp. mesenteroides (strain ATCC 8293 / DSM 20343 / BCRC 11652 / CCM 1803 / JCM 6124 / NCDO 523 / NBRC 100496 / NCIMB 8023 / NCTC 12954 / NRRL B-1118 / 37Y).